The chain runs to 1788 residues: Protein Shroom3 (1788 aa).

Disordered stretches follow at residues 1–25 (MMQVSQGTIGSPWHQAYHSSSSTSD), 146–174 (EVNSSSVKNRNYSRQPAYNRHSIGPHGRL), 225–263 (KAAGLHSTNTSSNAAQQPKHVHGDGHLHPVLERSPESSP), 321–367 (GAKS…KQEG), 382–401 (PDISTSSLTNDRNDQQPLRL), 469–488 (NIASSSHNKMDERSNRQADH), 498–548 (TVHA…GNKL), 727–768 (EISP…VTPT), 793–821 (TAEQKKRSYSEPEKMNEVGASESESAPLT), 876–915 (TGRRPSSQETRLLKERSQSTYFSGSIMDNQSMTSTSSMNS), 1011–1067 (SRRH…SASN), 1086–1133 (SFKN…PETK), 1171–1263 (KRGK…SEAE), 1303–1324 (DTESFSGTFVPPSPPPFPPPSL), 1404–1467 (VPAP…AKSQ), and 1507–1538 (ALKEKNQKRKAKKQIDNIIAPESEXKEEKRET). 2 stretches are compositionally biased toward polar residues: residues 147–161 (VNSSSVKNRNYSRQP) and 230–240 (HSTNTSSNAAQ). Composition is skewed to basic and acidic residues over residues 245–259 (VHGDGHLHPVLERSP) and 357–366 (SVKEREKKQE). The span at 476–488 (NKMDERSNRQADH) shows a compositional bias: basic and acidic residues. Positions 708–811 (VKDAQCKVLE…SEPEKMNEVG (104 aa)) constitute an ASD1 domain. A compositionally biased stretch (basic and acidic residues) spans 793–808 (TAEQKKRSYSEPEKMN). The span at 893 to 903 (QSTYFSGSIMD) shows a compositional bias: polar residues. The span at 904 to 915 (NQSMTSTSSMNS) shows a compositional bias: low complexity. Polar residues-rich tracts occupy residues 1055 to 1067 (EVGNKTSYASASN), 1100 to 1124 (ENSSTIQRSAQLENQRNTKTQSISG), and 1211 to 1263 (TSAQ…SEAE). Residues 1313-1323 (PPSPPPFPPPS) show a composition bias toward pro residues. Positions 1433–1451 (SILQSSEGNFNPSDSQSTL) are enriched in polar residues. An ASD2 domain is found at 1467 to 1756 (QELAKEIVTK…QLRCLTESLP (290 aa)). The segment covering 1529-1538 (SEXKEEKRET) has biased composition (basic and acidic residues). Residues 1653 to 1708 (RLARVENALSSLGEDASAEERKTWNEKKKQLCGQHEDARELKENLDRREKLVMDFL) adopt a coiled-coil conformation.

This sequence belongs to the shroom family. As to quaternary structure, interacts with F-actin. Interacts with ROCK1. In terms of tissue distribution, expressed in epithelial cells of the cement gland.

The protein localises to the cell junction. The protein resides in the adherens junction. It localises to the cytoplasm. Its subcellular location is the cytoskeleton. It is found in the apical cell membrane. Functionally, controls cell shape changes in the neuroepithelium during neural tube closure. Induces apical constriction in epithelial cells by promoting the apical accumulation of F-actin and myosin II, and probably by bundling stress fibers. Induces apicobasal cell elongation by redistributing gamma-tubulin and directing the assembly of robust apicobasal microtubule arrays. This Xenopus laevis (African clawed frog) protein is Protein Shroom3 (shroom3).